We begin with the raw amino-acid sequence, 492 residues long: Bifunctional purine biosynthesis protein PurH (492 aa).

The MGS-like domain occupies 1 to 144; sequence MKKVILSVSD…KNFKHVTTIV (144 aa).

The protein belongs to the PurH family.

It carries out the reaction (6R)-10-formyltetrahydrofolate + 5-amino-1-(5-phospho-beta-D-ribosyl)imidazole-4-carboxamide = 5-formamido-1-(5-phospho-D-ribosyl)imidazole-4-carboxamide + (6S)-5,6,7,8-tetrahydrofolate. The catalysed reaction is IMP + H2O = 5-formamido-1-(5-phospho-D-ribosyl)imidazole-4-carboxamide. It functions in the pathway purine metabolism; IMP biosynthesis via de novo pathway; 5-formamido-1-(5-phospho-D-ribosyl)imidazole-4-carboxamide from 5-amino-1-(5-phospho-D-ribosyl)imidazole-4-carboxamide (10-formyl THF route): step 1/1. The protein operates within purine metabolism; IMP biosynthesis via de novo pathway; IMP from 5-formamido-1-(5-phospho-D-ribosyl)imidazole-4-carboxamide: step 1/1. This chain is Bifunctional purine biosynthesis protein PurH, found in Staphylococcus carnosus (strain TM300).